Consider the following 504-residue polypeptide: Maturase K (504 aa).

This sequence belongs to the intron maturase 2 family. MatK subfamily.

Its subcellular location is the plastid. The protein resides in the chloroplast. Functionally, usually encoded in the trnK tRNA gene intron. Probably assists in splicing its own and other chloroplast group II introns. The protein is Maturase K of Hamamelis mollis (Chinese witch hazel).